Consider the following 122-residue polypeptide: Basic phospholipase A2 PLA-B (122 aa).

Disulfide bonds link C26–C115, C28–C44, C43–C95, C49–C122, C50–C88, C57–C81, and C75–C86. Residues Y27, G29, and G31 each coordinate Ca(2+). H47 is a catalytic residue. Residue D48 participates in Ca(2+) binding. D89 is a catalytic residue.

The protein belongs to the phospholipase A2 family. Group II subfamily. D49 sub-subfamily. Requires Ca(2+) as cofactor. As to expression, expressed by the venom gland.

Its subcellular location is the secreted. It carries out the reaction a 1,2-diacyl-sn-glycero-3-phosphocholine + H2O = a 1-acyl-sn-glycero-3-phosphocholine + a fatty acid + H(+). Snake venom phospholipase A2 (PLA2) that displays edema-inducing activities. PLA-B is three times more active than PLA-A in edema-inducing activities. PLA2 catalyzes the calcium-dependent hydrolysis of the 2-acyl groups in 3-sn-phosphoglycerides. The protein is Basic phospholipase A2 PLA-B of Protobothrops flavoviridis (Habu).